The primary structure comprises 338 residues: Phosphate transport system permease protein PstC 1 (338 aa).

8 consecutive transmembrane segments (helical) span residues 19-39 (GGIG…VLVI), 93-113 (TSAI…LVIV), 123-143 (AVGI…GLWG), 144-164 (AMTF…HNAP), 181-201 (GMLV…ATTT), 232-252 (LPWV…RALG), 254-274 (TMAV…NIYA), and 295-315 (TNFA…ITLL). Positions 87–320 (IVGTLATSAI…VITLLTNVAA (234 aa)) constitute an ABC transmembrane type-1 domain.

It belongs to the binding-protein-dependent transport system permease family. CysTW subfamily.

The protein resides in the cell membrane. In terms of biological role, part of the binding-protein-dependent transport system for phosphate; probably responsible for the translocation of the substrate across the membrane. In Mycobacterium bovis (strain ATCC BAA-935 / AF2122/97), this protein is Phosphate transport system permease protein PstC 1 (pstC1).